Consider the following 111-residue polypeptide: Probable 4-amino-4-deoxy-L-arabinose-phosphoundecaprenol flippase subunit ArnE (111 aa).

The Cytoplasmic portion of the chain corresponds to 1–35; it reads MIWLTLVFASLLSVAGQLCQKQATCFVAISKRRKH. Residues 36–56 traverse the membrane as a helical segment; it reads IVLWLGLALACLGLAMVLWLL. The 70-residue stretch at 40–109 folds into the EamA domain; that stretch reads LGLALACLGL…IIGGIVILGS (70 aa). Over 57–60 the chain is Periplasmic; the sequence is VLQN. A helical membrane pass occupies residues 61 to 81; the sequence is VPVGIAYPMLSLNFVWVTLAA. The Cytoplasmic segment spans residues 82–87; sequence VKLWHE. The chain crosses the membrane as a helical span at residues 88–108; it reads PVSPRHWCGVAFIIGGIVILG. Topologically, residues 109-111 are periplasmic; that stretch reads STV.

The protein belongs to the ArnE family. In terms of assembly, heterodimer of ArnE and ArnF.

Its subcellular location is the cell inner membrane. Its pathway is bacterial outer membrane biogenesis; lipopolysaccharide biosynthesis. In terms of biological role, translocates 4-amino-4-deoxy-L-arabinose-phosphoundecaprenol (alpha-L-Ara4N-phosphoundecaprenol) from the cytoplasmic to the periplasmic side of the inner membrane. In Escherichia coli O157:H7, this protein is Probable 4-amino-4-deoxy-L-arabinose-phosphoundecaprenol flippase subunit ArnE.